A 259-amino-acid polypeptide reads, in one-letter code: Deoxyribose-phosphate aldolase (259 aa).

Catalysis depends on aspartate 102, which acts as the Proton donor/acceptor. Residue lysine 167 is the Schiff-base intermediate with acetaldehyde of the active site. The Proton donor/acceptor role is filled by lysine 201.

This sequence belongs to the DeoC/FbaB aldolase family. DeoC type 2 subfamily.

The protein resides in the cytoplasm. The enzyme catalyses 2-deoxy-D-ribose 5-phosphate = D-glyceraldehyde 3-phosphate + acetaldehyde. The protein operates within carbohydrate degradation; 2-deoxy-D-ribose 1-phosphate degradation; D-glyceraldehyde 3-phosphate and acetaldehyde from 2-deoxy-alpha-D-ribose 1-phosphate: step 2/2. Its function is as follows. Catalyzes a reversible aldol reaction between acetaldehyde and D-glyceraldehyde 3-phosphate to generate 2-deoxy-D-ribose 5-phosphate. This chain is Deoxyribose-phosphate aldolase, found in Escherichia fergusonii (strain ATCC 35469 / DSM 13698 / CCUG 18766 / IAM 14443 / JCM 21226 / LMG 7866 / NBRC 102419 / NCTC 12128 / CDC 0568-73).